Reading from the N-terminus, the 322-residue chain is tRNA (guanine-N(7)-)-methyltransferase (322 aa).

Positions 29, 55, and 105 each coordinate S-adenosyl-L-methionine. Residue Asp105 is part of the active site. Substrate contacts are provided by Lys109 and Asp141.

Belongs to the class I-like SAM-binding methyltransferase superfamily. TrmB family.

It catalyses the reaction guanosine(46) in tRNA + S-adenosyl-L-methionine = N(7)-methylguanosine(46) in tRNA + S-adenosyl-L-homocysteine. It participates in tRNA modification; N(7)-methylguanine-tRNA biosynthesis. Its function is as follows. Catalyzes the formation of N(7)-methylguanine at position 46 (m7G46) in tRNA. The sequence is that of tRNA (guanine-N(7)-)-methyltransferase from Deinococcus radiodurans (strain ATCC 13939 / DSM 20539 / JCM 16871 / CCUG 27074 / LMG 4051 / NBRC 15346 / NCIMB 9279 / VKM B-1422 / R1).